Here is an 837-residue protein sequence, read N- to C-terminus: Katanin p80 WD40 repeat-containing subunit B1 homolog KTN80.4 (837 aa).

WD repeat units lie at residues 14 to 54, 57 to 96, 99 to 138, 141 to 182, 184 to 222, 225 to 265, and 267 to 304; these read AHSA…AILS, GHSS…IVRT, GHRS…CIHT, GHTR…TEFK, HEGQ…LIGS, PETA…DGVD, and GWSR…TEPC. The DWD box signature appears at 115–131; sequence FFASGSLDTNLKIWDIR. Disordered regions lie at residues 307–328, 358–462, and 501–614; these read GDTA…DPVV, GRLS…ANPV, and LQAA…LVIN. 2 stretches are compositionally biased toward polar residues: residues 376–387 and 412–450; these read IGRSSTSQNSES and TFSS…TSRR. The segment covering 509–520 has biased composition (low complexity); the sequence is SPSSRNNPDLPD. 2 stretches are compositionally biased toward basic and acidic residues: residues 553-563 and 580-595; these read ATERSINDFRY and RNHD…RSNR.

The protein belongs to the WD repeat KATNB1 family. As to quaternary structure, component of KTN80-KTN1 complexes composed of a hexamer of KTN1-KTN80 heterodimers that sense microtubule (MT) geometry to confer precise MT severing. Interacts directly with AAA1/KTN1, and weakly with KTN80.1 and KTN80.3. In terms of tissue distribution, expressed in siliques, flowers, leaves, stems and roots.

Its subcellular location is the cytoplasm. It localises to the cytoskeleton. Its function is as follows. May participate in a complex which severs microtubules in an ATP-dependent manner. This activity may promote rapid reorganization of cellular microtubule arrays. Confers precision to microtubule (MT) severing by specific targeting of KTN1 to MT cleavage sites such as crossover or branching nucleation sites. Together with other KTN80s, regulates cell elongation by modulating MT organization. This Arabidopsis thaliana (Mouse-ear cress) protein is Katanin p80 WD40 repeat-containing subunit B1 homolog KTN80.4.